The sequence spans 120 residues: Cu-Zn superoxide dismutase-like protein OPG175 (120 aa).

Cysteines 52 and 102 form a disulfide.

The protein belongs to the Cu-Zn superoxide dismutase family.

The protein localises to the virion. It localises to the host cytoplasm. Its function is as follows. Superoxide dismutase-like protein with no enzymatic activity. This is Cu-Zn superoxide dismutase-like protein OPG175 (OPG175) from Vaccinia virus (strain Tashkent) (VACV).